An 885-amino-acid polypeptide reads, in one-letter code: Cytosolic carboxypeptidase-like protein 5 (885 aa).

The 427-residue stretch at 150–576 (YPFSYAECQD…AVAVAALDMA (427 aa)) folds into the Peptidase M14 domain. Residues histidine 247 and glutamate 250 each coordinate Zn(2+). Disordered regions lie at residues 341–364 (SGSALKTSNQSNTSPPVATPTERE) and 392–428 (ESWEKSGVQREAEHSDENESAQSRGETNSAPSEQVPP). Over residues 344-356 (ALKTSNQSNTSPP) the composition is skewed to polar residues. Over residues 393-408 (SWEKSGVQREAEHSDE) the composition is skewed to basic and acidic residues. Polar residues predominate over residues 411–428 (SAQSRGETNSAPSEQVPP). Histidine 440 contributes to the Zn(2+) binding site. The Proton donor/acceptor role is filled by glutamate 522. Positions 606–668 (STGLTSNNRR…KSSPSFTFGT (63 aa)) are enriched in polar residues. Disordered stretches follow at residues 606-788 (STGL…RTAL) and 866-885 (ALLKNSSRQTDQHIHRSLPT). Basic and acidic residues predominate over residues 682–691 (RECKAQEKRR). A compositionally biased stretch (low complexity) spans 712–749 (LSAPVRAPLSPSSSSSSSSSSPSSSSSAPGPGSISLAG).

This sequence belongs to the peptidase M14 family. Zn(2+) serves as cofactor.

It localises to the cytoplasm. The protein localises to the cytosol. The protein resides in the nucleus. It is found in the cytoskeleton. Its subcellular location is the spindle. It localises to the midbody. It catalyses the reaction gamma-L-glutamyl-L-glutamyl-[protein] + H2O = L-glutamyl-[protein] + L-glutamate. The enzyme catalyses (L-glutamyl)(n+1)-gamma-L-glutamyl-L-glutamyl-[protein] + H2O = (L-glutamyl)(n)-gamma-L-glutamyl-L-glutamyl-[protein] + L-glutamate. The catalysed reaction is C-terminal L-alpha-aminoacyl-L-glutamyl-[tubulin] + H2O = C-terminal L-alpha-aminoacyl-[tubulin] + L-glutamate. It carries out the reaction C-terminal L-alpha-aminoacyl-L-glutamyl-L-glutamyl-[tubulin] + H2O = C-terminal L-alpha-aminoacyl-L-glutamyl-[tubulin] + L-glutamate. Its function is as follows. Metallocarboxypeptidase that mediates deglutamylation of tubulin and non-tubulin target proteins. Catalyzes the removal of polyglutamate side chains present on the gamma-carboxyl group of glutamate residues within the C-terminal tail of alpha- and beta-tubulin. Cleaves alpha- and gamma-linked polyglutamate tubulin side-chain, as well as the branching point glutamate. Also catalyzes the removal of alpha-linked glutamate residues from the carboxy-terminus of alpha-tubulin. The chain is Cytosolic carboxypeptidase-like protein 5 (agbl5) from Danio rerio (Zebrafish).